A 544-amino-acid chain; its full sequence is MDKNIKREIEIKRAKLLLLKNKENCTDAVSSSNKEGPKQISEDQLSNFLCKILKPTNLTPQTYSLESKSSNLVSDCELKISSVYQSYSSTFNVSNHVPSISKTVNIRETSKHLKHSTKAPKCSLPTSALEIDHLNNFLHSSAKILDRALCDQSNQLFTDYTVKKKSKKNKSQLEENGLNHLFTFQDEKITLNSVVNSISYSSFFEELLITSYAKPKEALRTRGLAIVWNQRWKNSPESVLKARSEITVCKPSPFHPQLIAGGAYNGQVFLWDLRQGQYPVSFTTIISGGHLEPVTDITYINNPPSNNIVTCSTDGLVHIWEPDMFSRPSETICLSSQVDSSSQCIPATCLSFIPENNMEFLVGAEDGKLQRGYRSDYSETKAVQPSNVSYEGHNVFISGIDVMTSNSQNVFLEKNKDFALTSSFDWTVRLWQCSPSRNQHELVPSNDLDEQVIINSCKTFTHKAMVFDVKWCVSEPCCFASVDALGNLNLWDLQKDVEAPVTSDIPDGKPLNKIAWQPEKRNLACGGLNGNVHIYKHLSPNLAN.

WD repeat units follow at residues 241 to 281 (KARS…YPVS), 289 to 330 (GHLE…RPSE), 342 to 387 (SQCI…QPSN), 402 to 441 (VMTS…NQHE), 461 to 501 (THKA…EAPV), and 506 to 544 (PDGK…NLAN).

This sequence belongs to the dynein intermediate chain family.

The protein resides in the cytoplasm. Functionally, has a role in meiotic nuclear divsion where it promotes the movement of 'horsetails'. The polypeptide is Dynein intermediate chain 1 (dic1) (Schizosaccharomyces pombe (strain 972 / ATCC 24843) (Fission yeast)).